Consider the following 117-residue polypeptide: Small ribosomal subunit protein bS16 (117 aa).

Residues 81–90 (LKKRPNRNNP) are compositionally biased toward basic residues. The segment at 81–117 (LKKRPNRNNPHKGQPGKKAQERISAAKQVAEAESAPV) is disordered.

This sequence belongs to the bacterial ribosomal protein bS16 family.

The sequence is that of Small ribosomal subunit protein bS16 from Bartonella quintana (strain Toulouse) (Rochalimaea quintana).